The following is a 110-amino-acid chain: Small heat shock protein hspG11 (110 aa).

Positions 30-110 constitute a sHSP domain; sequence KTIIDILPPM…KSTSTSSTFR (81 aa). Residues 78-110 form a disordered region; sequence KDLNKQHNNNNNNNNNNNNLVIEKSTSTSSTFR. The segment covering 85 to 96 has biased composition (low complexity); the sequence is NNNNNNNNNNNN. Positions 101–110 are enriched in polar residues; the sequence is KSTSTSSTFR.

This sequence belongs to the small heat shock protein (HSP20) family.

The chain is Small heat shock protein hspG11 (hspG11) from Dictyostelium discoideum (Social amoeba).